Consider the following 1543-residue polypeptide: Rho guanine nucleotide exchange factor 12 (1543 aa).

Residues Met-1–Arg-62 are disordered. At Ser-2 the chain carries N-acetylserine. Residues Ser-28 to Asp-45 show a composition bias toward basic and acidic residues. Phosphoserine is present on Ser-41. One can recognise a PDZ domain in the interval Cys-72–Ser-151. The stretch at Val-194–Asp-262 forms a coiled coil. Residues Ala-281–Asp-355 form a disordered region. Residues Asp-293–Ser-312 are compositionally biased toward low complexity. Ser-309 is modified (phosphoserine). A compositionally biased stretch (basic and acidic residues) spans Ser-313 to Gly-329. Ser-341 is subject to Phosphoserine. In terms of domain architecture, RGSL spans Gly-367–Lys-558. A disordered region spans residues Phe-574–Val-710. Residues Met-582–Gly-592 are compositionally biased toward basic and acidic residues. Ser-637 is subject to Phosphoserine. Residues Ala-663–Ser-676 are compositionally biased toward low complexity. Thr-736 carries the phosphothreonine modification. The DH domain maps to Lys-787–Ala-977. A coiled-coil region spans residues Ala-981–Tyr-1004. Residues Lys-1019–Ala-1132 form the PH domain. Positions Gln-1137 to Glu-1158 are disordered. Phosphoserine occurs at positions 1288, 1327, and 1377. 2 disordered regions span residues Glu-1386–Lys-1405 and Pro-1441–Ser-1468. Residues Ser-1450–Asn-1460 are compositionally biased toward polar residues. Ser-1457 and Ser-1540 each carry phosphoserine.

In terms of assembly, interacts with GNA12 and GNA13, probably through the RGS-like domain, with RHOA, PLXNB1 and PLXNB2, and through its PDZ domain with IGF1R beta subunit. Interacts with GCSAM. Found in a complex with ARHGEF11 and ARHGEF12; binding to ARHGEF11 and ARHGEF12 enhances CDC42 GEF activity of PLEKHG4B, and PLEKHG4B, in turn, inhibits ARHGEF11- and ARHGEF12-mediated RHOA activation. As to expression, expressed in brain, predominantly in neuronal cell bodies.

Its subcellular location is the cytoplasm. The protein resides in the membrane. In terms of biological role, may play a role in the regulation of RhoA GTPase by guanine nucleotide-binding alpha-12 (GNA12) and alpha-13 (GNA13). Acts as guanine nucleotide exchange factor (GEF) for RhoA GTPase and may act as GTPase-activating protein (GAP) for GNA12 and GNA13. The sequence is that of Rho guanine nucleotide exchange factor 12 (Arhgef12) from Mus musculus (Mouse).